The primary structure comprises 139 residues: ATP synthase epsilon chain 2 (139 aa).

It belongs to the ATPase epsilon chain family. As to quaternary structure, F-type ATPases have 2 components, CF(1) - the catalytic core - and CF(0) - the membrane proton channel. CF(1) has five subunits: alpha(3), beta(3), gamma(1), delta(1), epsilon(1). CF(0) has three main subunits: a, b and c.

It localises to the cell inner membrane. Its function is as follows. Produces ATP from ADP in the presence of a proton gradient across the membrane. In Ralstonia nicotianae (strain ATCC BAA-1114 / GMI1000) (Ralstonia solanacearum), this protein is ATP synthase epsilon chain 2 (atpC2).